The primary structure comprises 790 residues: Threonine--tRNA ligase 2, cytoplasmic (790 aa).

The residue at position 2 (Ala-2) is an N-acetylalanine. Residues 13-68 adopt a coiled-coil conformation; that stretch reads SRLQRQEEDIRWLCAEVQRLRDEQLRGPERGQAEGPRLTREVAQLQAENRDLHQRL. The disordered stretch occupies residues 80–117; that stretch reads RTEAGRAAAHEPPTQNQEKDTKKKRLKQSEPGREVKQP. Positions 96–117 are enriched in basic and acidic residues; the sequence is QEKDTKKKRLKQSEPGREVKQP. One can recognise a TGS domain in the interval 148-210; it reads NVISVRVAGG…EGDSTVELLM (63 aa). A Phosphoserine modification is found at Ser-441. The Nuclear localization signal motif lies at 774–780; it reads KLKNLKK.

Belongs to the class-II aminoacyl-tRNA synthetase family. In terms of assembly, may be a component of the multisynthetase complex (MSC), a large multi-subunit complex which contains at least eight different aminoacyl-tRNA synthetases plus three auxillary subunits AIMP1, AIMP2 and EEF1E1. Interacts with the MSC components EPRS1, AIMP1, AIMP2 and KARS1. As to expression, ubiquitous (at protein level). Strongly expressed in muscle (at protein level). Moderately expressed in heart and liver (at protein level). Weakly expressed in stomach, kidney, testis, spleen, brain, fat and lung (at protein level).

It is found in the cytoplasm. The protein resides in the nucleus. The enzyme catalyses tRNA(Thr) + L-threonine + ATP = L-threonyl-tRNA(Thr) + AMP + diphosphate + H(+). Its function is as follows. Catalyzes the attachment of threonine to tRNA(Thr) in a two-step reaction: threonine is first activated by ATP to form Thr-AMP and then transferred to the acceptor end of tRNA(Thr). Also edits incorrectly charged tRNA(Thr) via its editing domain, at the post-transfer stage. This chain is Threonine--tRNA ligase 2, cytoplasmic (Tars3), found in Mus musculus (Mouse).